The sequence spans 241 residues: Major prion protein (241 aa).

The N-terminal stretch at 1 to 15 is a signal peptide; the sequence is MLVLFVATWSDLGLC. The interval 16-31 is interaction with ADGRG6; it reads KKRPKPGGWNTGGSRY. Residues 16–223 form an interaction with GRB2, ERI3 and SYN1 region; the sequence is KKRPKPGGWN…ESQAYYQRGS (208 aa). Positions 18 to 100 are disordered; the sequence is RPKPGGWNTG…QWNKPSKPKT (83 aa). 5 tandem repeats follow at residues 44 to 52, 53 to 60, 61 to 68, 69 to 76, and 77 to 84. Residues 44 to 84 form a 5 X 8 AA tandem repeats of P-H-G-G-G-W-G-Q region; it reads PQGGGSWGQPHGGGWGQPHGGGWGQPHGGGWGQPHGGGWGQ. The span at 45–88 shows a compositional bias: gly residues; sequence QGGGSWGQPHGGGWGQPHGGGWGQPHGGGWGQPHGGGWGQGGGT. The Cu(2+) site is built by His54, Gly55, Gly56, His62, Gly63, Gly64, His70, Gly71, Gly72, His78, Gly79, and Gly80. A disulfide bridge links Cys172 with Cys207. Asn174 and Asn190 each carry an N-linked (GlcNAc...) asparagine glycan. A lipid anchor (GPI-anchor amidated serine) is attached at Ser223. Positions 224–241 are cleaved as a propeptide — removed in mature form; sequence SMVLFSSPPVILLISFLI.

Belongs to the prion family. Monomer and homodimer. Has a tendency to aggregate into amyloid fibrils containing a cross-beta spine, formed by a steric zipper of superposed beta-strands. Soluble oligomers may represent an intermediate stage on the path to fibril formation. Copper binding may promote oligomerization. Interacts with GRB2, APP, ERI3/PRNPIP and SYN1. Mislocalized cytosolically exposed PrP interacts with MGRN1; this interaction alters MGRN1 subcellular location and causes lysosomal enlargement. Interacts with APP. Interacts with KIAA1191. Interacts with ADGRG6.

The protein resides in the cell membrane. It localises to the golgi apparatus. Functionally, its primary physiological function is unclear. May play a role in neuronal development and synaptic plasticity. May be required for neuronal myelin sheath maintenance. May promote myelin homeostasis through acting as an agonist for ADGRG6 receptor. May play a role in iron uptake and iron homeostasis. Soluble oligomers are toxic to cultured neuroblastoma cells and induce apoptosis (in vitro). Association with GPC1 (via its heparan sulfate chains) targets PRNP to lipid rafts. Also provides Cu(2+) or Zn(2+) for the ascorbate-mediated GPC1 deaminase degradation of its heparan sulfate side chains. The chain is Major prion protein (PRNP) from Plecturocebus moloch (Dusky titi monkey).